The sequence spans 378 residues: Calponin homolog OV9M (378 aa).

Residues 1 to 20 (MPAQPAQENAQDADDAQANA) show a composition bias toward low complexity. Positions 1–35 (MPAQPAQENAQDADDAQANATMETRVAGQGQPKRV) are disordered. Calponin-like repeat units follow at residues 50–75 (IPSQ…RNTQ), 98–123 (VRLQ…RDVC), 151–176 (VRLQ…RRET), 197–222 (IPLQ…RRET), 244–269 (IPSQ…RWEV), 285–310 (VRLQ…RNTT), and 330–355 (IPSQ…RDVK). The disordered stretch occupies residues 175–194 (ETTKMTDSKHPDYDHERPDQ). Residues 230 to 256 (HPEYDPESSIDSSTIPSQMGSNKYASQ) are disordered. A compositionally biased stretch (polar residues) spans 238–256 (SIDSSTIPSQMGSNKYASQ). Residues 331 to 352 (PSQAGWNRGDSQKGMTGFGAPR) are disordered.

It belongs to the calponin family. As to expression, found in the longitudinal muscles below the hypodermis.

Could be involved in muscle contraction. The protein is Calponin homolog OV9M of Onchocerca volvulus.